Here is a 183-residue protein sequence, read N- to C-terminus: Small ribosomal subunit protein uS4 (183 aa).

The S4 RNA-binding domain occupies Arg-106 to His-168. Positions Asn-158 to Glu-183 are disordered. A compositionally biased stretch (basic and acidic residues) spans Asp-165–Glu-183.

It belongs to the universal ribosomal protein uS4 family. As to quaternary structure, part of the 30S ribosomal subunit. Contacts protein S5. The interaction surface between S4 and S5 is involved in control of translational fidelity.

In terms of biological role, one of the primary rRNA binding proteins, it binds directly to 16S rRNA where it nucleates assembly of the body of the 30S subunit. Functionally, with S5 and S12 plays an important role in translational accuracy. In Picrophilus torridus (strain ATCC 700027 / DSM 9790 / JCM 10055 / NBRC 100828 / KAW 2/3), this protein is Small ribosomal subunit protein uS4.